We begin with the raw amino-acid sequence, 447 residues long: Phosphoglucosamine mutase (447 aa).

S105 acts as the Phosphoserine intermediate in catalysis. Mg(2+) is bound by residues S105, D244, D246, and D248. Position 105 is a phosphoserine (S105).

Belongs to the phosphohexose mutase family. The cofactor is Mg(2+). In terms of processing, activated by phosphorylation.

The enzyme catalyses alpha-D-glucosamine 1-phosphate = D-glucosamine 6-phosphate. In terms of biological role, catalyzes the conversion of glucosamine-6-phosphate to glucosamine-1-phosphate. This chain is Phosphoglucosamine mutase, found in Polynucleobacter asymbioticus (strain DSM 18221 / CIP 109841 / QLW-P1DMWA-1) (Polynucleobacter necessarius subsp. asymbioticus).